The primary structure comprises 245 residues: UPF0280 protein UNCMA_16740 (245 aa).

It belongs to the UPF0280 family.

The sequence is that of UPF0280 protein UNCMA_16740 from Methanocella arvoryzae (strain DSM 22066 / NBRC 105507 / MRE50).